The sequence spans 390 residues: GTPase Obg (390 aa).

One can recognise an Obg domain in the interval 1-159; it reads MKFVDEATIK…RELRLELLLL (159 aa). The OBG-type G domain maps to 160-333; sequence ADVGMLGLPN…LCDELADFMD (174 aa). GTP-binding positions include 166 to 173, 191 to 195, 213 to 216, 283 to 286, and 314 to 316; these read GLPNAGKS, FTTLI, DIPG, NKTD, and AAV. Residues serine 173 and threonine 193 each coordinate Mg(2+).

It belongs to the TRAFAC class OBG-HflX-like GTPase superfamily. OBG GTPase family. Monomer. Mg(2+) is required as a cofactor.

The protein resides in the cytoplasm. In terms of biological role, an essential GTPase which binds GTP, GDP and possibly (p)ppGpp with moderate affinity, with high nucleotide exchange rates and a fairly low GTP hydrolysis rate. Plays a role in control of the cell cycle, stress response, ribosome biogenesis and in those bacteria that undergo differentiation, in morphogenesis control. The protein is GTPase Obg of Aliivibrio fischeri (strain MJ11) (Vibrio fischeri).